A 572-amino-acid chain; its full sequence is MTLAITSRLRRNFVFRRRNLESLLSPQCQKLINDLRSCRDTVEVSRIHGYMVKTGLDKDDFAVSKLLAFSSVLDIRYASSIFEHVSNTNLFMFNTMIRGYSISDEPERAFSVFNQLRAKGLTLDRFSFITTLKSCSRELCVSIGEGLHGIALRSGFMVFTDLRNALIHFYCVCGKISDARKVFDEMPQSVDAVTFSTLMNGYLQVSKKALALDLFRIMRKSEVVVNVSTLLSFLSAISDLGDLSGAESAHVLCIKIGLDLDLHLITALIGMYGKTGGISSARRIFDCAIRKDVVTWNCMIDQYAKTGLLEECVWLLRQMKYEKMKPNSSTFVGLLSSCAYSEAAFVGRTVADLLEEERIALDAILGTALVDMYAKVGLLEKAVEIFNRMKDKDVKSWTAMISGYGAHGLAREAVTLFNKMEEENCKVRPNEITFLVVLNACSHGGLVMEGIRCFKRMVEAYSFTPKVEHYGCVVDLLGRAGQLEEAYELIRNLPITSDSTAWRALLAACRVYGNADLGESVMMRLAEMGETHPADAILLAGTHAVAGNPEKSLDNELNKGRKEAGYSAIEIE.

The N-terminal 117 residues, 1–117, are a transit peptide targeting the mitochondrion; sequence MTLAITSRLR…RAFSVFNQLR (117 aa). 12 PPR repeats span residues 89–123, 124–158, 159–189, 191–225, 226–260, 261–291, 292–326, 327–361, 362–392, 393–427, 430–460, and 466–496; these read NLFMFNTMIRGYSISDEPERAFSVFNQLRAKGLTL, DRFSFITTLKSCSRELCVSIGEGLHGIALRSGFMV, FTDLRNALIHFYCVCGKISDARKVFDEMPQS, DAVTFSTLMNGYLQVSKKALALDLFRIMRKSEVVV, NVSTLLSFLSAISDLGDLSGAESAHVLCIKIGLDL, DLHLITALIGMYGKTGGISSARRIFDCAIRK, DVVTWNCMIDQYAKTGLLEECVWLLRQMKYEKMKP, NSSTFVGLLSSCAYSEAAFVGRTVADLLEEERIAL, DAILGTALVDMYAKVGLLEKAVEIFNRMKDK, DVKSWTAMISGYGAHGLAREAVTLFNKMEEENCKV, NEITFLVVLNACSHGGLVMEGIRCFKRMVEA, and KVEHYGCVVDLLGRAGQLEEAYELIRNLPIT. The interval 501–572 is type E motif; it reads AWRALLAACR…EAGYSAIEIE (72 aa).

The protein belongs to the PPR family. PCMP-E subfamily.

Its subcellular location is the mitochondrion. In Arabidopsis thaliana (Mouse-ear cress), this protein is Pentatricopeptide repeat-containing protein At1g26900, mitochondrial (PCMP-E54).